A 621-amino-acid polypeptide reads, in one-letter code: 1-deoxy-D-xylulose-5-phosphate synthase (621 aa).

Thiamine diphosphate contacts are provided by residues His80 and 121–123 (GHS). Asp152 serves as a coordination point for Mg(2+). Thiamine diphosphate-binding positions include 153 to 154 (GA), Asn181, Tyr288, and Glu370. Asn181 is a Mg(2+) binding site.

The protein belongs to the transketolase family. DXPS subfamily. In terms of assembly, homodimer. Mg(2+) is required as a cofactor. Requires thiamine diphosphate as cofactor.

It carries out the reaction D-glyceraldehyde 3-phosphate + pyruvate + H(+) = 1-deoxy-D-xylulose 5-phosphate + CO2. The protein operates within metabolic intermediate biosynthesis; 1-deoxy-D-xylulose 5-phosphate biosynthesis; 1-deoxy-D-xylulose 5-phosphate from D-glyceraldehyde 3-phosphate and pyruvate: step 1/1. In terms of biological role, catalyzes the acyloin condensation reaction between C atoms 2 and 3 of pyruvate and glyceraldehyde 3-phosphate to yield 1-deoxy-D-xylulose-5-phosphate (DXP). This Shewanella sediminis (strain HAW-EB3) protein is 1-deoxy-D-xylulose-5-phosphate synthase.